A 131-amino-acid polypeptide reads, in one-letter code: Snaclec alboaggregin-A subunit alpha (131 aa).

Positions 1-131 (DCPSDWSSYD…EYPFVCKFXR (131 aa)) constitute a C-type lectin domain. Intrachain disulfides connect C2-C13, C30-C127, and C102-C119.

It belongs to the snaclec family. Heterotetramer of the subunits alpha, alpha', beta and beta'; disulfide-linked. Expressed by the venom gland.

It is found in the secreted. Functionally, potent platelet activator that aggregates platelets via both GPIbalpha (GP1BA) and GPVI (GP6). Induces a tyrosine phosphorylation profile in platelets that resembles this produced by collagen, involving the time dependent tyrosine phosphorylation of Fc receptor gamma chain (FCGR1A), phospholipase Cgamma2 (PLCG2), and LAT. The sequence is that of Snaclec alboaggregin-A subunit alpha from Trimeresurus albolabris (White-lipped pit viper).